The following is a 392-amino-acid chain: Formate-dependent phosphoribosylglycinamide formyltransferase (392 aa).

N(1)-(5-phospho-beta-D-ribosyl)glycinamide-binding positions include 22-23 and E82; that span reads EL. Residues R114, K155, 160–165, 195–198, and E203 contribute to the ATP site; these read SSGKGQ and EGVV. The 190-residue stretch at 119–308 folds into the ATP-grasp domain; it reads RLAAEELQLP…EFALHVRAFL (190 aa). Positions 267 and 279 each coordinate Mg(2+). Residues D286, K355, and 362 to 363 each bind N(1)-(5-phospho-beta-D-ribosyl)glycinamide; that span reads RR.

It belongs to the PurK/PurT family. As to quaternary structure, homodimer.

It catalyses the reaction N(1)-(5-phospho-beta-D-ribosyl)glycinamide + formate + ATP = N(2)-formyl-N(1)-(5-phospho-beta-D-ribosyl)glycinamide + ADP + phosphate + H(+). Its pathway is purine metabolism; IMP biosynthesis via de novo pathway; N(2)-formyl-N(1)-(5-phospho-D-ribosyl)glycinamide from N(1)-(5-phospho-D-ribosyl)glycinamide (formate route): step 1/1. In terms of biological role, involved in the de novo purine biosynthesis. Catalyzes the transfer of formate to 5-phospho-ribosyl-glycinamide (GAR), producing 5-phospho-ribosyl-N-formylglycinamide (FGAR). Formate is provided by PurU via hydrolysis of 10-formyl-tetrahydrofolate. The chain is Formate-dependent phosphoribosylglycinamide formyltransferase from Shigella flexneri.